Here is a 207-residue protein sequence, read N- to C-terminus: Large ribosomal subunit protein uL4 (207 aa).

The disordered stretch occupies residues Leu44–Ile78. Residues Gly60–Gly71 are compositionally biased toward basic residues.

It belongs to the universal ribosomal protein uL4 family. As to quaternary structure, part of the 50S ribosomal subunit.

Functionally, one of the primary rRNA binding proteins, this protein initially binds near the 5'-end of the 23S rRNA. It is important during the early stages of 50S assembly. It makes multiple contacts with different domains of the 23S rRNA in the assembled 50S subunit and ribosome. Forms part of the polypeptide exit tunnel. The polypeptide is Large ribosomal subunit protein uL4 (Halalkalibacterium halodurans (strain ATCC BAA-125 / DSM 18197 / FERM 7344 / JCM 9153 / C-125) (Bacillus halodurans)).